The chain runs to 760 residues: 5-methyltetrahydropteroyltriglutamate--homocysteine methyltransferase (760 aa).

Residues 24–27 (RELK) and Lys-118 contribute to the 5-methyltetrahydropteroyltri-L-glutamate site. L-homocysteine is bound by residues 437–439 (IGS) and Glu-490. L-methionine contacts are provided by residues 437–439 (IGS) and Glu-490. 5-methyltetrahydropteroyltri-L-glutamate is bound by residues 521-522 (RC) and Trp-567. An L-homocysteine-binding site is contributed by Asp-605. Position 605 (Asp-605) interacts with L-methionine. Residue Glu-611 coordinates 5-methyltetrahydropteroyltri-L-glutamate. Zn(2+) contacts are provided by His-647, Cys-649, and Glu-671. The Proton donor role is filled by His-700. Position 732 (Cys-732) interacts with Zn(2+).

It belongs to the vitamin-B12 independent methionine synthase family. The cofactor is Zn(2+).

It catalyses the reaction 5-methyltetrahydropteroyltri-L-glutamate + L-homocysteine = tetrahydropteroyltri-L-glutamate + L-methionine. It participates in amino-acid biosynthesis; L-methionine biosynthesis via de novo pathway; L-methionine from L-homocysteine (MetE route): step 1/1. Functionally, catalyzes the transfer of a methyl group from 5-methyltetrahydrofolate to homocysteine resulting in methionine formation. The sequence is that of 5-methyltetrahydropteroyltriglutamate--homocysteine methyltransferase from Mycobacterium leprae (strain TN).